The sequence spans 277 residues: MIRRPAVAGAFYERDPAALRRRIEWCFEHELGPGTLPAVGSMRRIKGVIAPHAGYMYSGPVAAHAYHELVSDGIPGTLVIICPNHTGMGSGVSLMQQGAWETPLGTVEIDSELAEAIVRESGIIDLDETAHLAEHSCEVHVPFIQYFTDNFRIVPVTMWMQGHETAADVGHAVASAIRETGRDAAVIASTDFTHYSPQDIAEATDRRIIDRITAMDDTGMYGVISELNATMCGYGPVAATIIASRILGATECDLLRYATSGDVTGDRSSVVGYAHLS.

Belongs to the MEMO1 family.

The protein is MEMO1 family protein MTH_45 of Methanothermobacter thermautotrophicus (strain ATCC 29096 / DSM 1053 / JCM 10044 / NBRC 100330 / Delta H) (Methanobacterium thermoautotrophicum).